Here is a 902-residue protein sequence, read N- to C-terminus: Cytosolic carboxypeptidase 2 (902 aa).

A Peptidase M14 domain is found at 396–666 (YPYTYTDLQC…HVCDTLLDFC (271 aa)). Residues His-462, Glu-465, and His-558 each coordinate Zn(2+). The active-site Proton donor/acceptor is the Glu-630. Positions 746–758 (FKKKKKKSLQTRK) are enriched in basic residues. Disordered stretches follow at residues 746–770 (FKKK…KNLM) and 796–879 (FKNS…PRSR). The segment covering 853–866 (VSCSPKRTINSSQE) has biased composition (polar residues).

The protein belongs to the peptidase M14 family. In terms of assembly, interacts with RARRES1, KIF11 AND MAPRE1. Requires Zn(2+) as cofactor.

Its subcellular location is the cytoplasm. It is found in the cytosol. The protein localises to the cytoskeleton. It localises to the microtubule organizing center. The protein resides in the centrosome. Its subcellular location is the centriole. It is found in the cilium basal body. The catalysed reaction is (L-glutamyl)(n+1)-gamma-L-glutamyl-L-glutamyl-[protein] + H2O = (L-glutamyl)(n)-gamma-L-glutamyl-L-glutamyl-[protein] + L-glutamate. Its activity is regulated as follows. Inhibited by RARRES1. Metallocarboxypeptidase that mediates deglutamylation of tubulin and non-tubulin target proteins. Catalyzes the removal of polyglutamate side chains present on the gamma-carboxyl group of glutamate residues within the C-terminal tail of tubulin protein. Specifically cleaves tubulin long-side-chains, while it is not able to remove the branching point glutamate. Also catalyzes the removal of polyglutamate residues from the carboxy-terminus of non-tubulin proteins such as MYLK. The sequence is that of Cytosolic carboxypeptidase 2 from Homo sapiens (Human).